Here is a 120-residue protein sequence, read N- to C-terminus: MFLLHEYDIFWAFLLISSVIPILAFLISGVLAPTREGPEKLSSYESGIEPIGDAWVQFRIRYYMFALVFVVFDVETVFLYPWAMSFDVLGVSVFLEALIFVLILIVGSVYAWRKGALEWS.

3 helical membrane-spanning segments follow: residues 9–29 (IFWA…LISG), 64–84 (MFAL…PWAM), and 88–108 (VLGV…IVGS).

Belongs to the complex I subunit 3 family. NDH is composed of at least 16 different subunits, 5 of which are encoded in the nucleus.

Its subcellular location is the plastid. The protein resides in the chloroplast thylakoid membrane. The enzyme catalyses a plastoquinone + NADH + (n+1) H(+)(in) = a plastoquinol + NAD(+) + n H(+)(out). It catalyses the reaction a plastoquinone + NADPH + (n+1) H(+)(in) = a plastoquinol + NADP(+) + n H(+)(out). NDH shuttles electrons from NAD(P)H:plastoquinone, via FMN and iron-sulfur (Fe-S) centers, to quinones in the photosynthetic chain and possibly in a chloroplast respiratory chain. The immediate electron acceptor for the enzyme in this species is believed to be plastoquinone. Couples the redox reaction to proton translocation, and thus conserves the redox energy in a proton gradient. In Acorus calamus var. americanus (American sweet flag), this protein is NAD(P)H-quinone oxidoreductase subunit 3, chloroplastic.